Reading from the N-terminus, the 183-residue chain is ATP synthase subunit delta (183 aa).

This sequence belongs to the ATPase delta chain family. As to quaternary structure, F-type ATPases have 2 components, F(1) - the catalytic core - and F(0) - the membrane proton channel. F(1) has five subunits: alpha(3), beta(3), gamma(1), delta(1), epsilon(1). F(0) has three main subunits: a(1), b(2) and c(10-14). The alpha and beta chains form an alternating ring which encloses part of the gamma chain. F(1) is attached to F(0) by a central stalk formed by the gamma and epsilon chains, while a peripheral stalk is formed by the delta and b chains.

It is found in the cell inner membrane. Functionally, f(1)F(0) ATP synthase produces ATP from ADP in the presence of a proton or sodium gradient. F-type ATPases consist of two structural domains, F(1) containing the extramembraneous catalytic core and F(0) containing the membrane proton channel, linked together by a central stalk and a peripheral stalk. During catalysis, ATP synthesis in the catalytic domain of F(1) is coupled via a rotary mechanism of the central stalk subunits to proton translocation. Its function is as follows. This protein is part of the stalk that links CF(0) to CF(1). It either transmits conformational changes from CF(0) to CF(1) or is implicated in proton conduction. The sequence is that of ATP synthase subunit delta from Nitratidesulfovibrio vulgaris (strain ATCC 29579 / DSM 644 / CCUG 34227 / NCIMB 8303 / VKM B-1760 / Hildenborough) (Desulfovibrio vulgaris).